The primary structure comprises 199 residues: Thymidine kinase (199 aa).

ATP contacts are provided by residues 15 to 22 and 88 to 91; these read GSMFSGKS and DEVQ. Glutamate 89 (proton acceptor) is an active-site residue. Positions 145, 148, 183, and 186 each coordinate Zn(2+).

It belongs to the thymidine kinase family. In terms of assembly, homotetramer.

The protein localises to the cytoplasm. The enzyme catalyses thymidine + ATP = dTMP + ADP + H(+). The chain is Thymidine kinase from Staphylococcus aureus (strain USA300).